The chain runs to 53 residues: Large ribosomal subunit protein bL33 (53 aa).

Belongs to the bacterial ribosomal protein bL33 family.

The chain is Large ribosomal subunit protein bL33 from Blochmanniella floridana.